The primary structure comprises 766 residues: Polyribonucleotide nucleotidyltransferase (766 aa).

Mg(2+) is bound by residues D490 and D496. The KH domain maps to 557-616 (PKIDTITIPVDKIKVVIGKGGEQIDKIIAETGVKIDIDDEGLCSIFSSDQSAIDRAKEII). The S1 motif domain occupies 626-694 (GEVYEAKVVR…DKGRVDASMR (69 aa)). Basic and acidic residues-rich tracts occupy residues 700-734 (PEGYVEPERKPRERRDNKDRRNGNGFDRRNNDRNN) and 744-766 (FELRERKSHVDHEFPELSTKKPE). A disordered region spans residues 700-766 (PEGYVEPERK…FPELSTKKPE (67 aa)).

Belongs to the polyribonucleotide nucleotidyltransferase family. Requires Mg(2+) as cofactor.

The protein resides in the cytoplasm. The catalysed reaction is RNA(n+1) + phosphate = RNA(n) + a ribonucleoside 5'-diphosphate. In terms of biological role, involved in mRNA degradation. Catalyzes the phosphorolysis of single-stranded polyribonucleotides processively in the 3'- to 5'-direction. In Lactococcus lactis subsp. cremoris (strain MG1363), this protein is Polyribonucleotide nucleotidyltransferase.